The primary structure comprises 436 residues: Enolase (436 aa).

Q167 provides a ligand contact to (2R)-2-phosphoglycerate. E209 (proton donor) is an active-site residue. Mg(2+) contacts are provided by D246, E291, and D318. Positions 343, 372, 373, and 394 each coordinate (2R)-2-phosphoglycerate. K343 serves as the catalytic Proton acceptor.

The protein belongs to the enolase family. In terms of assembly, component of the RNA degradosome, a multiprotein complex involved in RNA processing and mRNA degradation. Mg(2+) serves as cofactor.

It localises to the cytoplasm. It is found in the secreted. The protein localises to the cell surface. The catalysed reaction is (2R)-2-phosphoglycerate = phosphoenolpyruvate + H2O. It participates in carbohydrate degradation; glycolysis; pyruvate from D-glyceraldehyde 3-phosphate: step 4/5. In terms of biological role, catalyzes the reversible conversion of 2-phosphoglycerate (2-PG) into phosphoenolpyruvate (PEP). It is essential for the degradation of carbohydrates via glycolysis. The sequence is that of Enolase from Haemophilus influenzae (strain 86-028NP).